Here is a 215-residue protein sequence, read N- to C-terminus: Ribonuclease HII (215 aa).

Residues 19-214 (KNVIGVDEAG…KILETEEEKT (196 aa)) enclose the RNase H type-2 domain. The a divalent metal cation site is built by D25, E26, and D121.

It belongs to the RNase HII family. Mn(2+) serves as cofactor. The cofactor is Mg(2+).

The protein resides in the cytoplasm. The catalysed reaction is Endonucleolytic cleavage to 5'-phosphomonoester.. Endonuclease that specifically degrades the RNA of RNA-DNA hybrids. In Fusobacterium nucleatum subsp. nucleatum (strain ATCC 25586 / DSM 15643 / BCRC 10681 / CIP 101130 / JCM 8532 / KCTC 2640 / LMG 13131 / VPI 4355), this protein is Ribonuclease HII.